The sequence spans 449 residues: Phosphoglucosamine mutase (449 aa).

Ser101 functions as the Phosphoserine intermediate in the catalytic mechanism. 4 residues coordinate Mg(2+): Ser101, Asp241, Asp243, and Asp245. Ser101 bears the Phosphoserine mark.

It belongs to the phosphohexose mutase family. Requires Mg(2+) as cofactor. Activated by phosphorylation.

The catalysed reaction is alpha-D-glucosamine 1-phosphate = D-glucosamine 6-phosphate. In terms of biological role, catalyzes the conversion of glucosamine-6-phosphate to glucosamine-1-phosphate. This chain is Phosphoglucosamine mutase, found in Alkaliphilus oremlandii (strain OhILAs) (Clostridium oremlandii (strain OhILAs)).